Here is a 642-residue protein sequence, read N- to C-terminus: Threonine--tRNA ligase (642 aa).

One can recognise a TGS domain in the interval 1-61; it reads MPVITLPDGS…ENDAQLSIIT (61 aa). The catalytic stretch occupies residues 243–534; that stretch reads DHRKIGKQLD…LTEEFAGFFP (292 aa). K286 bears the N6-acetyllysine mark. Zn(2+)-binding residues include C334, H385, and H511.

This sequence belongs to the class-II aminoacyl-tRNA synthetase family. Homodimer. The cofactor is Zn(2+).

It localises to the cytoplasm. The enzyme catalyses tRNA(Thr) + L-threonine + ATP = L-threonyl-tRNA(Thr) + AMP + diphosphate + H(+). Catalyzes the attachment of threonine to tRNA(Thr) in a two-step reaction: L-threonine is first activated by ATP to form Thr-AMP and then transferred to the acceptor end of tRNA(Thr). Also edits incorrectly charged L-seryl-tRNA(Thr). The sequence is that of Threonine--tRNA ligase from Escherichia coli O8 (strain IAI1).